The chain runs to 182 residues: Small ribosomal subunit protein uS4c (182 aa).

Residues 13–34 are disordered; sequence GLTSKRPRSGSDPKNQLRSGKR. Residues 82–143 form the S4 RNA-binding domain; sequence MRLDNILFRL…KQRSKALIQN (62 aa).

Belongs to the universal ribosomal protein uS4 family. As to quaternary structure, part of the 30S ribosomal subunit. Contacts protein S5. The interaction surface between S4 and S5 is involved in control of translational fidelity.

The protein localises to the plastid. Its subcellular location is the chloroplast. One of the primary rRNA binding proteins, it binds directly to 16S rRNA where it nucleates assembly of the body of the 30S subunit. Its function is as follows. With S5 and S12 plays an important role in translational accuracy. The polypeptide is Small ribosomal subunit protein uS4c (rps4) (Iris lutescens (Crimean iris)).